The sequence spans 324 residues: tRNA-modifying protein YgfZ (324 aa).

Trp-186 contacts folate.

It belongs to the tRNA-modifying YgfZ family.

It localises to the cytoplasm. In terms of biological role, folate-binding protein involved in regulating the level of ATP-DnaA and in the modification of some tRNAs. It is probably a key factor in regulatory networks that act via tRNA modification, such as initiation of chromosomal replication. In Colwellia psychrerythraea (strain 34H / ATCC BAA-681) (Vibrio psychroerythus), this protein is tRNA-modifying protein YgfZ.